A 1298-amino-acid chain; its full sequence is Activating molecule in BECN1-regulated autophagy protein 1 (1298 aa).

Residues 1 to 22 (MKVVPEKNAVRILWGRERGARA) form an interaction with DDB1 region. K45 participates in a covalent cross-link: Glycyl lysine isopeptide (Lys-Gly) (interchain with G-Cter in ubiquitin). 3 WD repeats span residues 51–90 (DSPR…CVHS), 93–133 (GHRR…ESWF), and 135–175 (DSNN…AVVK). A Phosphoserine; by MTOR modification is found at S52. Positions 254–266 (IQVGEQSTVQDSA) are enriched in polar residues. The tract at residues 254-284 (IQVGEQSTVQDSATPSPPPPPPQPSTERPRT) is disordered. The span at 268–277 (PSPPPPPPQP) shows a compositional bias: pro residues. A PxP motif 1 motif is present at residues 275-281 (PQPSTER). S328 carries the post-translational modification Phosphoserine. Positions 343-413 (FVQTEPFHPP…SRYHREIAPG (71 aa)) are disordered. Positions 354-385 (QASSTQQDQGLLNRPSAFSTVQSSTAGNTLRN) are enriched in polar residues. A phosphoserine mark is found at S394 and S443. 3 stretches are compositionally biased toward polar residues: residues 458–467 (SQASVYTSAT), 547–561 (HQPT…SNLS), and 590–601 (NYSSGEASSSWQ). Disordered stretches follow at residues 458-494 (SQAS…NSGS), 538-561 (IESE…SNLS), 590-690 (NYSS…DSLR), and 747-796 (RYQQ…NARM). Low complexity-rich tracts occupy residues 602–614 (VPSS…SSGS) and 628–639 (SSSRLELSSSAS). 2 positions are modified to phosphoserine: S635 and S639. Over residues 661–674 (YTQSSRSGTVSQEA) the composition is skewed to polar residues. R747 carries the asymmetric dimethylarginine modification. Residues 772–781 (TDLEFEDFED) show a composition bias toward acidic residues. Phosphoserine; by IKKA is present on S1043. Positions 1043 to 1052 (SGVEYYWDQL) match the LIR motif. Residues 1060-1075 (HSNSRSSERPGTSRAT) are compositionally biased toward polar residues. Positions 1060–1079 (HSNSRSSERPGTSRATWRTD) are disordered. 2 short sequence motifs (TQT motif) span residues 1104–1106 (TQT) and 1116–1118 (TQT). Disordered stretches follow at residues 1112 to 1143 (QNAE…YGAS), 1190 to 1214 (RSSQ…SRGL), and 1227 to 1298 (SPRT…PRNR). Polar residues predominate over residues 1191 to 1212 (SSQTGTEPGAAHTSSPQPSTSR). S1205 is subject to Phosphoserine. The PxP motif 2 motif lies at 1206–1212 (PQPSTSR).

Belongs to the WD repeat AMBRA1 family. As to quaternary structure, component of the DCX(AMBRA1) E3 ubiquitin ligase complex, also named CRL4(AMBRA1), at least composed of CUL4 (CUL4A or CUL4B), DDB1, AMBRA1 and RBX1. Interacts with BECN1. Probably forms a complex with BECN1 and PIK3C3. Interacts with BECN2. Interacts with BCL2; leading to prevent interaction with BCN1 and autophagy, interaction is disrupted upon autophagy induction. Interacts with ULK1. Interacts (via PxP motifs) with PPP2CA; enhancing interaction between PPP2CA and MYC or FOXO3. Forms a complex with PPP2CA and BECN1; AMBRA1 and BECN1 components of the complex regulate MYC stability via different pathways. Interacts (TQT motifs) with DYNLL1 and DYNLL2; tethering AMBRA1 and the BECN1-PIK3C3 complex in absence of autophagy. Interacts with TRAF6; interaction is required to mediate 'Lys-63'-linked ubiquitination of ULK1. Interacts with TRIM32; promoting activation of ULK1 by TRIM32 via unanchored 'Lys-63'-linked polyubiquitin chains. Interacts with PRKN. Interacts (via LIR motif) with LC3 (MAP1LC3A, MAP1LC3B or MAP1LC3C). Interacts with HUWE1. Interacts with PTK2/FAK. Interacts with SRC; required for SRC trafficking to autophagosomes. Post-translationally, phosphorylation at Ser-52 by MTOR inhibits its ability to regulate autophagy and mediate ubiquitination of ULK1. Phosphorylation by ULK1 in response to autophagy induction abolishes interaction with DYNLL1 and DYNLL2, releasing AMBRA1 from the cytoskeletal docking site to induce autophagosome nucleation. Phosphorylation by MTOR inhibits interaction with PPP2CA and subsequent dephosphorylation of MYC. Phosphorylation at Ser-1043 by CHUK/IKKA promotes its interaction with ATG8 family proteins GABARAP and MAP1LC3B and its mitophagic activity. Ubiquitinated by RNF2 via 'Lys-48'-linkage in unstressed cells, leading to its degradation by the proteasome. Induction of autophagy promotes stabilization via interaction with CUL4 (CUL4A or CUL4B) and DDB1. Upon prolonged starvation, ubiquitinated and degraded, terminating the autophagy response. In terms of processing, undergoes proteolytic processing by caspase-6 (CASP6), caspase-7 (CASP7) and caspase-8 (CASP8) during apoptosis, resulting in the dismantling of the autophagic machinery and the accomplishment of the programmed cell death program. Also cleaved by calpains during apoptosis, which mediate a complete proteolytic degradation.

The protein resides in the endoplasmic reticulum. It is found in the cytoplasm. It localises to the cytoskeleton. The protein localises to the cytoplasmic vesicle. Its subcellular location is the autophagosome. The protein resides in the mitochondrion. It is found in the cytosol. It localises to the nucleus. The protein localises to the cell junction. Its subcellular location is the focal adhesion. It participates in protein modification; protein ubiquitination. Functionally, substrate-recognition component of a DCX (DDB1-CUL4-X-box) E3 ubiquitin-protein ligase complex involved in cell cycle control and autophagy. The DCX(AMBRA1) complex specifically mediates the polyubiquitination of target proteins such as BECN1, CCND1, CCND2, CCND3, ELOC and ULK1. Acts as an upstream master regulator of the transition from G1 to S cell phase: AMBRA1 specifically recognizes and binds phosphorylated cyclin-D (CCND1, CCND2 and CCND3), leading to cyclin-D ubiquitination by the DCX(AMBRA1) complex and subsequent degradation. By controlling the transition from G1 to S phase and cyclin-D degradation, AMBRA1 acts as a tumor suppressor that promotes genomic integrity during DNA replication and counteracts developmental abnormalities and tumor growth. AMBRA1 also regulates the cell cycle by promoting MYC dephosphorylation and degradation independently of the DCX(AMBRA1) complex: acts via interaction with the catalytic subunit of protein phosphatase 2A (PPP2CA), which enhances interaction between PPP2CA and MYC, leading to MYC dephosphorylation and degradation. Acts as a regulator of Cul5-RING (CRL5) E3 ubiquitin-protein ligase complexes by mediating ubiquitination and degradation of Elongin-C (ELOC) component of CRL5 complexes. Acts as a key regulator of autophagy by modulating the BECN1-PIK3C3 complex: controls protein turnover during neuronal development, and regulates normal cell survival and proliferation. In normal conditions, AMBRA1 is tethered to the cytoskeleton via interaction with dyneins DYNLL1 and DYNLL2. Upon autophagy induction, AMBRA1 is released from the cytoskeletal docking site to induce autophagosome nucleation by mediating ubiquitination of proteins involved in autophagy. The DCX(AMBRA1) complex mediates 'Lys-63'-linked ubiquitination of BECN1, increasing the association between BECN1 and PIK3C3 to promote PIK3C3 activity. In collaboration with TRAF6, AMBRA1 mediates 'Lys-63'-linked ubiquitination of ULK1 following autophagy induction, promoting ULK1 stability and kinase activity. Also activates ULK1 via interaction with TRIM32: TRIM32 stimulates ULK1 through unanchored 'Lys-63'-linked polyubiquitin chains. Also acts as an activator of mitophagy via interaction with PRKN and LC3 proteins (MAP1LC3A, MAP1LC3B or MAP1LC3C); possibly by bringing damaged mitochondria onto autophagosomes. Also activates mitophagy by acting as a cofactor for HUWE1; acts by promoting HUWE1-mediated ubiquitination of MFN2. AMBRA1 is also involved in regulatory T-cells (Treg) differentiation by promoting FOXO3 dephosphorylation independently of the DCX(AMBRA1) complex: acts via interaction with PPP2CA, which enhances interaction between PPP2CA and FOXO3, leading to FOXO3 dephosphorylation and stabilization. May act as a regulator of intracellular trafficking, regulating the localization of active PTK2/FAK and SRC. Also involved in transcription regulation by acting as a scaffold for protein complexes at chromatin. This Homo sapiens (Human) protein is Activating molecule in BECN1-regulated autophagy protein 1.